A 606-amino-acid polypeptide reads, in one-letter code: Aspartate--tRNA(Asp/Asn) ligase (606 aa).

An L-aspartate-binding site is contributed by glutamate 177. Positions 201–204 are aspartate; it reads QLFK. L-aspartate is bound at residue arginine 223. ATP-binding positions include 223 to 225 and glutamine 232; that span reads RDE. L-aspartate is bound at residue histidine 461. Residue glutamate 499 participates in ATP binding. Residue arginine 506 coordinates L-aspartate. 551 to 554 is an ATP binding site; it reads GMDR.

This sequence belongs to the class-II aminoacyl-tRNA synthetase family. Type 1 subfamily. Homodimer.

The protein resides in the cytoplasm. The enzyme catalyses tRNA(Asx) + L-aspartate + ATP = L-aspartyl-tRNA(Asx) + AMP + diphosphate. Its function is as follows. Aspartyl-tRNA synthetase with relaxed tRNA specificity since it is able to aspartylate not only its cognate tRNA(Asp) but also tRNA(Asn). Reaction proceeds in two steps: L-aspartate is first activated by ATP to form Asp-AMP and then transferred to the acceptor end of tRNA(Asp/Asn). This chain is Aspartate--tRNA(Asp/Asn) ligase, found in Prochlorococcus marinus (strain MIT 9313).